The primary structure comprises 238 residues: IkB-like protein (238 aa).

ANK repeat units lie at residues 48 to 80 (GSSV…IINH), 87 to 118 (GNSA…TRIC), 124 to 153 (GMTP…PTQK), and 158 to 187 (GFTA…PLYM). A Nuclear localization signal motif is present at residues 80 to 86 (HHRRDND). A Nuclear localization signal motif is present at residues 202-213 (KKKPKIIITGCK). A PxIxITxC motif; Interaction with host PPP3CA motif is present at residues 205-212 (PKIIITGC). The short motif at 227–230 (FLCV) is the FLCV motif element.

It belongs to the asfivirus A238L family. As to quaternary structure, interacts with host PPIA. Interacts with host PPP3CA/Calcineurin. Interacts with host RELA/p65; interaction of the 32 kDa form with host RELA results in the formation of a stable complex with NF-kappa-B. Interacts with host PPP3R1. Interacts with host EP300; this interaction inhibits the association of host EP300 with host RELA, JUN and NFATC2. The protein exists in a 28 kDa and a 32 kDa form, probably due to post-translational modifications which are neither phosphorylation, nor sumoylation.

It is found in the host nucleus. Its subcellular location is the host cytoplasm. Its function is as follows. IkB-like protein that inhibits the binding of NF-kappa-B to DNA, thereby downregulating pro-inflammatory cytokine production. Forms a heterodimer with the NF-kappa-B subunit RELA/p65 and prevents the activation of the NF-kappa-B transcription factor. Inhibits calcineurin function, which is required for the induction of nuclear factor of activated T cells (NFAT)-dependent immune response genes. Prevents the binding of substrates to calcineurin without affecting the phosphatase activity. Does not contain the serine residues that are phosphorylated by host IkB kinase and thus is not degraded following stimulation of the NFkB pathway. The protein is IkB-like protein (A238L) of Ornithodoros (relapsing fever ticks).